We begin with the raw amino-acid sequence, 132 residues long: Small ribosomal subunit protein uS8c (132 aa).

It belongs to the universal ribosomal protein uS8 family. Part of the 30S ribosomal subunit.

It is found in the plastid. It localises to the chloroplast. Its function is as follows. One of the primary rRNA binding proteins, it binds directly to 16S rRNA central domain where it helps coordinate assembly of the platform of the 30S subunit. The sequence is that of Small ribosomal subunit protein uS8c (rps8) from Marchantia polymorpha (Common liverwort).